Here is a 63-residue protein sequence, read N- to C-terminus: uncharacterized protein (63 aa).

A helical transmembrane segment spans residues 4–24; that stretch reads LNQFILIFLLLIVILFIFFLI.

The protein resides in the membrane. This is an uncharacterized protein from Invertebrate iridescent virus 6 (IIV-6).